An 881-amino-acid polypeptide reads, in one-letter code: Probable alpha/beta-glucosidase agdC (881 aa).

The signal sequence occupies residues 1–14 (MLRSLLLLAPLVGA). N-linked (GlcNAc...) asparagine glycosylation is found at Asn-171, Asn-293, and Asn-373. Asp-422 functions as the Nucleophile in the catalytic mechanism. The active site involves Glu-425. The disordered stretch occupies residues 440 to 485 (YARDNDLPPAAPPVRPSNPRPLPGFPGDFQPSSSSKRSTKGSKVGL). The span at 448 to 463 (PAAPPVRPSNPRPLPG) shows a compositional bias: pro residues. A glycan (N-linked (GlcNAc...) asparagine) is linked at Asn-506. Asp-571 (proton donor) is an active-site residue. N-linked (GlcNAc...) asparagine glycosylation is found at Asn-572, Asn-608, and Asn-742.

The protein belongs to the glycosyl hydrolase 31 family.

Its subcellular location is the secreted. It carries out the reaction Hydrolysis of terminal, non-reducing (1-&gt;4)-linked alpha-D-glucose residues with release of alpha-D-glucose.. The catalysed reaction is Hydrolysis of terminal, non-reducing beta-D-glucosyl residues with release of beta-D-glucose.. Glucosidase involved in the degradation of cellulosic biomass. Has both alpha- and beta-glucosidase activity. The protein is Probable alpha/beta-glucosidase agdC (agdC) of Aspergillus fumigatus (strain CBS 144.89 / FGSC A1163 / CEA10) (Neosartorya fumigata).